The primary structure comprises 448 residues: tRNA modification GTPase MnmE (448 aa).

Arg24, Glu81, and Lys120 together coordinate (6S)-5-formyl-5,6,7,8-tetrahydrofolate. One can recognise a TrmE-type G domain in the interval Gly216–Gly373. Asn226 contacts K(+). Residues Asn226 to Ser231, Thr245 to Thr251, and Asp270 to Gly273 each bind GTP. Ser230 contributes to the Mg(2+) binding site. 3 residues coordinate K(+): Thr245, Ile247, and Thr250. Thr251 serves as a coordination point for Mg(2+). Residue Lys448 coordinates (6S)-5-formyl-5,6,7,8-tetrahydrofolate.

It belongs to the TRAFAC class TrmE-Era-EngA-EngB-Septin-like GTPase superfamily. TrmE GTPase family. As to quaternary structure, homodimer. Heterotetramer of two MnmE and two MnmG subunits. It depends on K(+) as a cofactor.

It is found in the cytoplasm. Exhibits a very high intrinsic GTPase hydrolysis rate. Involved in the addition of a carboxymethylaminomethyl (cmnm) group at the wobble position (U34) of certain tRNAs, forming tRNA-cmnm(5)s(2)U34. The polypeptide is tRNA modification GTPase MnmE (Neisseria meningitidis serogroup B (strain ATCC BAA-335 / MC58)).